A 307-amino-acid chain; its full sequence is MAALLLGAVLLVAQPQLVPSRPAELGQQELLRKAGTLQDDVRDGVAPNGSAQQLPQTIIIGVRKGGTRALLEMLSLHPDVAAAENEVHFFDWEEHYSHGLGWYLSQMPFSWPHQLTVEKTPAYFTSPKVPERVYSMNPSIRLLLILRDPSERVLSDYTQVFYNHMQKHKPYPSIEEFLVRDGRLNVDYKALNRSLYHVHMQNWLRFFPLRHIHIVDGDRLIRDPFPEIQKVERFLKLSPQINASNFYFNKTKGFYCLRDSGRDRCLHESKGRAHPQVDPKLLNKLHEYFHEPNKKFFELVGRTFDWH.

Residues 1–20 (MAALLLGAVLLVAQPQLVPS) form the signal peptide. The N-linked (GlcNAc...) asparagine glycan is linked to Asn48. Residues 64-68 (KGGTR), Arg147, and Ser155 each bind 3'-phosphoadenylyl sulfate. N-linked (GlcNAc...) asparagine glycans are attached at residues Asn192, Asn242, and Asn249. Tyr255 serves as a coordination point for 3'-phosphoadenylyl sulfate. A disulfide bond links Cys256 and Cys265. Residue 270–274 (KGRAH) coordinates 3'-phosphoadenylyl sulfate.

Belongs to the sulfotransferase 1 family. As to expression, highly expressed in the brain and kidney and weakly expressed in the heart, lung and placenta.

It is found in the golgi apparatus lumen. It catalyses the reaction alpha-D-glucosaminyl-[heparan sulfate](n) + 3'-phosphoadenylyl sulfate = 3-sulfo-alpha-D-glucosaminyl-[heparan sulfate](n) + adenosine 3',5'-bisphosphate + H(+). Sulfotransferase that utilizes 3'-phospho-5'-adenylyl sulfate (PAPS) to catalyze the transfer of a sulfo group to position 3 of glucosamine residues in heparan. Catalyzes the rate limiting step in the biosynthesis of heparan sulfate (HSact). This modification is a crucial step in the biosynthesis of anticoagulant heparan sulfate as it completes the structure of the antithrombin pentasaccharide binding site. This is Heparan sulfate glucosamine 3-O-sulfotransferase 1 (HS3ST1) from Homo sapiens (Human).